The following is a 209-amino-acid chain: Large ribosomal subunit protein uL4 (209 aa).

A disordered region spans residues 50–78; that stretch reads STLKKGEVSGGGKKPYQQKHTGRARQGSI.

It belongs to the universal ribosomal protein uL4 family. As to quaternary structure, part of the 50S ribosomal subunit.

One of the primary rRNA binding proteins, this protein initially binds near the 5'-end of the 23S rRNA. It is important during the early stages of 50S assembly. It makes multiple contacts with different domains of the 23S rRNA in the assembled 50S subunit and ribosome. Its function is as follows. Forms part of the polypeptide exit tunnel. In Mycoplasmoides gallisepticum (strain R(low / passage 15 / clone 2)) (Mycoplasma gallisepticum), this protein is Large ribosomal subunit protein uL4.